The following is a 611-amino-acid chain: UvrABC system protein C (611 aa).

The GIY-YIG domain maps to 19-97; sequence QRPGVYRMVD…IKELRPRYNV (79 aa). Positions 207–242 constitute a UVR domain; the sequence is NQVIEELGARMEAASERLEFEAAAQYRDRIQALQAV.

It belongs to the UvrC family. In terms of assembly, interacts with UvrB in an incision complex.

It is found in the cytoplasm. Functionally, the UvrABC repair system catalyzes the recognition and processing of DNA lesions. UvrC both incises the 5' and 3' sides of the lesion. The N-terminal half is responsible for the 3' incision and the C-terminal half is responsible for the 5' incision. This is UvrABC system protein C from Alkalilimnicola ehrlichii (strain ATCC BAA-1101 / DSM 17681 / MLHE-1).